Consider the following 223-residue polypeptide: Glycolipid transfer protein 2 (223 aa).

Positions 69, 73, 116, and 155 each coordinate a ganglioside GM3 (d18:1(4E)).

Belongs to the GLTP family.

Its function is as follows. Transfers glycolipids in vitro. This is Glycolipid transfer protein 2 from Arabidopsis thaliana (Mouse-ear cress).